The primary structure comprises 186 residues: Potassium-transporting ATPase KdpC subunit (186 aa).

The helical transmembrane segment at 10 to 30 threads the bilayer; the sequence is LTIITMVLCGFLFPLAITLIG.

It belongs to the KdpC family. The system is composed of three essential subunits: KdpA, KdpB and KdpC.

The protein localises to the cell membrane. In terms of biological role, part of the high-affinity ATP-driven potassium transport (or Kdp) system, which catalyzes the hydrolysis of ATP coupled with the electrogenic transport of potassium into the cytoplasm. This subunit acts as a catalytic chaperone that increases the ATP-binding affinity of the ATP-hydrolyzing subunit KdpB by the formation of a transient KdpB/KdpC/ATP ternary complex. The sequence is that of Potassium-transporting ATPase KdpC subunit from Staphylococcus aureus (strain COL).